The sequence spans 269 residues: uncharacterized protein (269 aa).

5 consecutive transmembrane segments (helical) span residues 65–85 (FSLF…LFVM), 156–176 (VTSV…ISMV), 182–202 (YTRI…WLGF), 206–226 (MMSF…NDFW), and 242–262 (TLSA…EFSF). Residues 266-269 (KKKW) carry the Di-lysine motif motif.

It belongs to the SURF4 family.

The protein localises to the membrane. This is an uncharacterized protein from Caenorhabditis elegans.